The sequence spans 412 residues: Potassium channel, subfamily K, member 13 (412 aa).

At 1-21 (MACRSGCCCNSIGSFNEDNAR) the chain is on the cytoplasmic side. Residues 22 to 42 (FLMLALLIIIYLLCGAAVFSA) form a helical membrane-spanning segment. Positions 97–117 (WDFAGAFYFVGTVVSTIGFGM) form an intramembrane region, pore-forming. T112, I113, and G114 together coordinate K(+). The tract at residues 112-117 (TIGFGM) is selectivity filter 1. The chain crosses the membrane as a helical span at residues 127-147 (IFLIFYGLIGCAATILFFNLF). Over 148 to 198 (LERVITVIAFVLKFCHERRESRKAGPTQNCRRPSTDNRDRRTDSLAGWKPS) the chain is Cytoplasmic. A helical membrane pass occupies residues 199–219 (VYCVMLILGVAAILVSCCASA). The segment at residues 229 to 249 (YLDALYFCFVAFSTIGFGDMV) is an intramembrane region (pore-forming). K(+) is bound by residues T242, I243, G244, and F245. The interval 242-247 (TIGFGD) is selectivity filter 2. The helical transmembrane segment at 268–288 (LFILTGVCCIYSLFNVISIVI) threads the bilayer. Residues 289–412 (KQVLNWLLRR…NRLAETSVDR (124 aa)) lie on the Cytoplasmic side of the membrane. Residues 374–386 (MANGHPRQSGSSS) are compositionally biased toward polar residues. A disordered region spans residues 374-395 (MANGHPRQSGSSSRHNEFSGGV).

The protein belongs to the two pore domain potassium channel (TC 1.A.1.8) family. Homodimer. Heterodimer. In terms of tissue distribution, brain and heart.

It localises to the cell membrane. It carries out the reaction K(+)(in) = K(+)(out). Its activity is regulated as follows. The channel conductance is activated by arachidonic acid and inhibited by Ba(2+) ions, volatile anesthetics such as halothane and antiarrhythmic drug mexiletine. Insensitive to extracellular pH change. K(+) channel that conducts outward rectifying tonic currents potentiated by purinergic signals. Homo- and heterodimerizes to form functional channels with distinct regulatory and gating properties. Contributes most of K(+) currents at the plasma membrane of resting microglia. Maintains a depolarized membrane potential required for proper ramified microglia morphology and phagocytosis, selectively mediating microglial pruning of presynaptic compartments at hippocampal excitatory synapses. Upon local release of ATP caused by neuronal injury or infection, it is potentiated by purinergic signaling and contributes to ATP-triggered K(+) efflux underlying microglial NLRP3 inflammasome assembly and IL1B release. The sequence is that of Potassium channel, subfamily K, member 13 from Danio rerio (Zebrafish).